Consider the following 470-residue polypeptide: Poly(A) polymerase catalytic subunit (470 aa).

Residues Asp192 and Asp194 contribute to the active site.

Belongs to the poxviridae poly(A) polymerase catalytic subunit family. As to quaternary structure, heterodimer of a large (catalytic) subunit and a small (regulatory) subunit.

The catalysed reaction is RNA(n) + ATP = RNA(n)-3'-adenine ribonucleotide + diphosphate. Its function is as follows. Polymerase that creates the 3'-poly(A) tail of mRNA's. This is Poly(A) polymerase catalytic subunit (PAPL) from Erythrocebus patas (Red guenon).